A 384-amino-acid polypeptide reads, in one-letter code: 4-hydroxy-3-methylbut-2-en-1-yl diphosphate synthase (flavodoxin) 1 (384 aa).

4 residues coordinate [4Fe-4S] cluster: C281, C284, C316, and E323.

The protein belongs to the IspG family. It depends on [4Fe-4S] cluster as a cofactor.

It catalyses the reaction (2E)-4-hydroxy-3-methylbut-2-enyl diphosphate + oxidized [flavodoxin] + H2O + 2 H(+) = 2-C-methyl-D-erythritol 2,4-cyclic diphosphate + reduced [flavodoxin]. It functions in the pathway isoprenoid biosynthesis; isopentenyl diphosphate biosynthesis via DXP pathway; isopentenyl diphosphate from 1-deoxy-D-xylulose 5-phosphate: step 5/6. Converts 2C-methyl-D-erythritol 2,4-cyclodiphosphate (ME-2,4cPP) into 1-hydroxy-2-methyl-2-(E)-butenyl 4-diphosphate. This is 4-hydroxy-3-methylbut-2-en-1-yl diphosphate synthase (flavodoxin) 1 from Streptomyces coelicolor (strain ATCC BAA-471 / A3(2) / M145).